The sequence spans 510 residues: Protein phosphatase 1H (510 aa).

The PPM-type phosphatase domain maps to 73–503 (STGYAEVINA…DDISVYVIPL (431 aa)). 2 disordered regions span residues 105–128 (VQST…EGLQ) and 188–225 (LGEE…PTRF).

Belongs to the PP2C family.

The protein localises to the nucleus. It localises to the cytoplasm. It carries out the reaction O-phospho-L-seryl-[protein] + H2O = L-seryl-[protein] + phosphate. It catalyses the reaction O-phospho-L-threonyl-[protein] + H2O = L-threonyl-[protein] + phosphate. This is Protein phosphatase 1H (ppm1h) from Xenopus tropicalis (Western clawed frog).